A 475-amino-acid chain; its full sequence is Bifunctional protein HldE (475 aa).

A ribokinase region spans residues 1 to 321 (MADKIDISLY…RALHQITASH (321 aa)). 197 to 200 (NLKE) serves as a coordination point for ATP. Residue Asp-266 is part of the active site. Positions 346 to 475 (MTNGCFDILH…TSRLVEKMLN (130 aa)) are cytidylyltransferase.

This sequence in the N-terminal section; belongs to the carbohydrate kinase PfkB family. In the C-terminal section; belongs to the cytidylyltransferase family. In terms of assembly, homodimer.

It carries out the reaction D-glycero-beta-D-manno-heptose 7-phosphate + ATP = D-glycero-beta-D-manno-heptose 1,7-bisphosphate + ADP + H(+). The catalysed reaction is D-glycero-beta-D-manno-heptose 1-phosphate + ATP + H(+) = ADP-D-glycero-beta-D-manno-heptose + diphosphate. The protein operates within nucleotide-sugar biosynthesis; ADP-L-glycero-beta-D-manno-heptose biosynthesis; ADP-L-glycero-beta-D-manno-heptose from D-glycero-beta-D-manno-heptose 7-phosphate: step 1/4. Its pathway is nucleotide-sugar biosynthesis; ADP-L-glycero-beta-D-manno-heptose biosynthesis; ADP-L-glycero-beta-D-manno-heptose from D-glycero-beta-D-manno-heptose 7-phosphate: step 3/4. In terms of biological role, catalyzes the phosphorylation of D-glycero-D-manno-heptose 7-phosphate at the C-1 position to selectively form D-glycero-beta-D-manno-heptose-1,7-bisphosphate. Its function is as follows. Catalyzes the ADP transfer from ATP to D-glycero-beta-D-manno-heptose 1-phosphate, yielding ADP-D-glycero-beta-D-manno-heptose. This chain is Bifunctional protein HldE, found in Coxiella burnetii (strain Dugway 5J108-111).